Here is a 369-residue protein sequence, read N- to C-terminus: Uroporphyrinogen decarboxylase (369 aa).

Substrate contacts are provided by residues 28 to 32 (RQAGR), Asp-78, Tyr-154, Ser-209, and His-339.

This sequence belongs to the uroporphyrinogen decarboxylase family. In terms of assembly, homodimer.

The protein localises to the cytoplasm. It carries out the reaction uroporphyrinogen III + 4 H(+) = coproporphyrinogen III + 4 CO2. It functions in the pathway porphyrin-containing compound metabolism; protoporphyrin-IX biosynthesis; coproporphyrinogen-III from 5-aminolevulinate: step 4/4. Its function is as follows. Catalyzes the decarboxylation of four acetate groups of uroporphyrinogen-III to yield coproporphyrinogen-III. This Polaromonas sp. (strain JS666 / ATCC BAA-500) protein is Uroporphyrinogen decarboxylase.